Reading from the N-terminus, the 159-residue chain is 17 kDa surface antigen (159 aa).

The signal sequence occupies residues 1-19 (MKLLSKIMIIALAASMLQA). Cysteine 20 carries N-palmitoyl cysteine lipidation. The S-diacylglycerol cysteine moiety is linked to residue cysteine 20.

It belongs to the rickettsiale 17 kDa surface antigen family.

The protein localises to the cell outer membrane. This Rickettsia felis (strain ATCC VR-1525 / URRWXCal2) (Rickettsia azadi) protein is 17 kDa surface antigen (omp).